A 940-amino-acid chain; its full sequence is Serine/threonine-protein phosphatase 1 regulatory subunit 10 (940 aa).

Residues 1 to 348 are interaction with TOX4; it reads MGSGPIDPKE…EPAPPSEAME (348 aa). The TFIIS N-terminal domain maps to 73-147; that stretch reads KLLNNWLTYS…SDWMAVIRSQ (75 aa). Disordered stretches follow at residues 147–210, 248–270, 304–400, and 534–557; these read QSST…KFRS, NVAA…NTTP, KIKK…KSVT, and VETL…LPPV. 2 stretches are compositionally biased toward basic and acidic residues: residues 153–166 and 174–196; these read AEKD…EGKS and PLTE…EKPK. A Glycyl lysine isopeptide (Lys-Gly) (interchain with G-Cter in SUMO2) cross-link involves residue K179. T256 is subject to Phosphothreonine. K262 participates in a covalent cross-link: Glycyl lysine isopeptide (Lys-Gly) (interchain with G-Cter in SUMO2). S313 is modified (phosphoserine). The span at 325–336 shows a compositional bias: low complexity; sequence KTSTEPSTAKPS. Positions 357–433 are necessary for interaction with PPP1CA; that stretch reads PPVEVPELMD…NKIKDFGEAA (77 aa). The residue at position 382 (S382) is a Phosphoserine. Residues 393–408 form a necessary for interaction with PPP1CC region; the sequence is GRKRKSVTWPEEGKLR. A PP1-binding motif motif is present at residues 394 to 423; the sequence is RKRKSVTWPEEGKLREYFYFELDETERVNV. S398 carries the post-translational modification Phosphoserine; by PKA. Positions 418–619 are interaction with WDR82; the sequence is TERVNVNKIK…IKQMLVPHGL (202 aa). Residues 540–551 show a composition bias toward gly residues; the sequence is GGSGGSPDGAGG. S545 and S591 each carry phosphoserine. Residues 617-905 form a disordered region; it reads HGLLGPGPIA…HDGGHSHGGD (289 aa). Positions 644 to 655 are enriched in pro residues; sequence PPGPGGPMPGPH. Residue R665 is modified to Omega-N-methylarginine. The span at 676-690 shows a compositional bias: low complexity; sequence GDPFWDGPGDPMRGG. An omega-N-methylarginine mark is found at R693 and R738. Composition is skewed to gly residues over residues 725-763 and 789-844; these read ARGG…GMGN and GSMG…GSGG. 2 stretches are compositionally biased toward basic and acidic residues: residues 861 to 886 and 894 to 903; these read PHDV…HDGP and RGHDGGHSHG. The C3H1-type zinc-finger motif lies at 906-934; that stretch reads MSNRPVCRHFMMKGNCRYENNCAFYHPGV.

In terms of assembly, component of the PNUTS-PP1 complex (also named PTW/PP1 complex), composed of PPP1R10/PNUTS, TOX4, WDR82, and PPP1CA (or PPP1CB or PPP1CC). In terms of processing, phosphorylated on Ser-398 by PKA within the region necessary for interaction with PPP1CA.

The protein localises to the nucleus. The protein resides in the chromosome. Functionally, substrate-recognition component of the PNUTS-PP1 protein phosphatase complex, a protein phosphatase 1 (PP1) complex that promotes RNA polymerase II transcription pause-release, allowing transcription elongation. Promoter-proximal pausing by RNA polymerase II is a transcription halt following transcription initiation but prior to elongation, which acts as a checkpoint to control that transcripts are favorably configured for transcriptional elongation. The PNUTS-PP1 complex mediates the release of RNA polymerase II from promoter-proximal region of genes by catalyzing dephosphorylation of proteins involved in transcription, such as AFF4, CDK9, MEPCE, INTS12, NCBP1, POLR2M/GDOWN1 and SUPT6H. The PNUTS-PP1 complex also regulates RNA polymerase II transcription termination by mediating dephosphorylation of SUPT5H in termination zones downstream of poly(A) sites, thereby promoting deceleration of RNA polymerase II transcription. PNUTS-PP1 complex is also involved in the response to replication stress by mediating dephosphorylation of POLR2A at 'Ser-5' of the CTD, promoting RNA polymerase II degradation. The PNUTS-PP1 complex also plays a role in the control of chromatin structure and cell cycle progression during the transition from mitosis into interphase. PNUTS-PP1 complex mediates dephosphorylation of MYC, promoting MYC stability by preventing MYC ubiquitination by the SCF(FBXW7) complex. In addition to acts as a substrate-recognition component, PPP1R10/PNUTS also acts as a nuclear targeting subunit for the PNUTS-PP1 complex. In some context, PPP1R10/PNUTS also acts as an inhibitor of protein phosphatase 1 (PP1) activity by preventing access to substrates, such as RB. In Pan troglodytes (Chimpanzee), this protein is Serine/threonine-protein phosphatase 1 regulatory subunit 10 (PPP1R10).